The following is a 1616-amino-acid chain: DNA (cytosine-5)-methyltransferase 1 (1616 aa).

Residues 1-120 (MPARTAPARV…NQARSEARRV (120 aa)) form an interaction with DMAP1 region. An interaction with DNMT3A region spans residues 1–148 (MPARTAPARV…RRSKSDGEAK (148 aa)). 2 interaction with the PRC2/EED-EZH2 complex regions span residues 1-336 (MPAR…TEKK) and 308-606 (NPQI…TIRH). The region spanning 16-109 (PAISLPDDVR…NREVNGRLEN (94 aa)) is the DMAP1-binding domain. K70 bears the N6,N6-dimethyllysine mark. The disordered stretch occupies residues 103–349 (VNGRLENGNQ…AKTVMNSKTH (247 aa)). Phosphoserine is present on residues S127 and S133. T137 bears the Phosphothreonine mark. A Phosphoserine modification is found at S141. K142 is subject to N6-methyllysine; by SETD7. The residue at position 143 (S143) is a Phosphoserine; by PKB/AKT1. The tract at residues 149–217 (PEPSPSPRIT…TSRERVARPL (69 aa)) is interaction with DNMT3B. S152 and S154 each carry phosphoserine. N6-acetyllysine is present on K160. Residues 163 to 174 (RQTTITSHFAKG) are interaction with PCNA. Residue T166 is modified to Phosphothreonine. K173 and K188 each carry N6-acetyllysine. The Nuclear localization signal motif lies at 177–205 (KRKPQEESERAKSDESIKEEDKDQDEKRR). 3 stretches are compositionally biased toward basic and acidic residues: residues 179 to 214 (KPQEESERAKSDESIKEEDKDQDEKRRRVTSRERVA), 221 to 267 (EPER…REAR), and 281 to 306 (KDEKKHRSQPKDLAAKRRPEEKEPEK). An N6-acetyllysine; alternate modification is found at K259. K259 is covalently cross-linked (Glycyl lysine isopeptide (Lys-Gly) (interchain with G-Cter in SUMO2); alternate). A homodimerization region spans residues 310 to 502 (QISDEKDEDE…PEYAPIFGLM (193 aa)). A Phosphoserine modification is found at S312. Residues 321-337 (EEKRRKTTPKEPTEKKM) are compositionally biased toward basic and acidic residues. The tract at residues 331 to 550 (EPTEKKMARA…NLNRFTEDSL (220 aa)) is DNA replication foci-targeting sequence. Zn(2+) is bound by residues C353 and C356. Position 366 is an N6-acetyllysine (K366). Residues S394 and S398 each carry the phosphoserine modification. Zn(2+) contacts are provided by C414 and H418. Phosphoserine occurs at positions 509 and 549. A CXXC-type zinc finger spans residues 646 to 692 (NAFKRRRCGVCEVCQQPECGKCKACKDMVKFGGSGRSKQACQERRCP). The tract at residues 651–697 (RRCGVCEVCQQPECGKCKACKDMVKFGGSGRSKQACQERRCPNMAMK) is required for activity. Positions 653, 656, 659, 664, 667, 670, 686, and 691 each coordinate Zn(2+). The autoinhibitory linker stretch occupies residues 693–754 (NMAMKEADDD…SYYKKVCIDA (62 aa)). Residues 699–709 (ADDDEEVDDNI) are compositionally biased toward acidic residues. Residues 699–729 (ADDDEEVDDNIPEMPSPKKMHQGKKKKQNKN) are disordered. S714 carries the post-translational modification Phosphoserine. Residues 716-728 (KKMHQGKKKKQNK) show a composition bias toward basic residues. Position 732 is a phosphoserine (S732). K749 is modified (N6-acetyllysine). Residues 755–880 (ETLEVGDCVS…QDYARFESPP (126 aa)) enclose the BAH 1 domain. S878 carries the post-translational modification Phosphoserine. Residues K891, K957, K961, K975, and K1054 each carry the N6-acetyllysine modification. Residues 972–1100 (HYRKYSDYIK…AKSKSFEDPP (129 aa)) enclose the BAH 2 domain. The interval 1095–1130 (SFEDPPNHARSPGNKGKGKGKGKGKPKSQACEPSEP) is disordered. Repeat copies occupy residues 1109 to 1110 (KG), 1111 to 1112 (KG), 1113 to 1114 (KG), 1115 to 1116 (KG), and 1117 to 1118 (KG). Residues 1109–1120 (KGKGKGKGKGKP) form a 6 X 2 AA tandem repeats of K-G region. Over residues 1110 to 1120 (GKGKGKGKGKP) the composition is skewed to basic residues. 3 positions are modified to N6-acetyllysine: K1111, K1113, and K1115. K1117 is subject to N6-acetyllysine; by EHMT2. Residues K1119 and K1121 each carry the N6-acetyllysine modification. Residues 1119–1120 (KP) form a 6; approximate repeat. An interaction with the PRC2/EED-EZH2 complex region spans residues 1121–1616 (KSQACEPSEP…KIKEEEAAKD (496 aa)). Residues 1139–1599 (LRTLDVFSGC…LEIKLCMLAK (461 aa)) enclose the SAM-dependent MTase C5-type domain. Residues 1139–1616 (LRTLDVFSGC…KIKEEEAAKD (478 aa)) are catalytic. S-adenosyl-L-methionine contacts are provided by residues S1146, 1150–1151 (GL), 1168–1169 (EM), 1190–1191 (DC), and C1191. The active site involves C1226. 2 positions are modified to N6-acetyllysine: K1349 and K1415. S-adenosyl-L-methionine is bound by residues N1578 and V1580. A Glycyl lysine isopeptide (Lys-Gly) (interchain with G-Cter in SUMO2) cross-link involves residue K1609.

This sequence belongs to the class I-like SAM-binding methyltransferase superfamily. C5-methyltransferase family. Homodimer. Forms a stable complex with E2F1, BB1 and HDAC1. Forms a complex with DMAP1 and HDAC2, with direct interaction. Interacts with the PRC2/EED-EZH2 complex. Probably part of a corepressor complex containing ZNF304, TRIM28, SETDB1 and DNMT1. Interacts with UHRF1; promoting its recruitment to hemimethylated DNA. Interacts with USP7, promoting its deubiquitination. Interacts with PCNA. Interacts with MBD2 and MBD3. Interacts with DNMT3A and DNMT3B. Interacts with UBC9. Interacts with CSNK1D. Interacts with HDAC1. Interacts with BAZ2A/TIP5. Interacts with SIRT7. Interacts with ZNF263; recruited to the SIX3 promoter along with other proteins involved in chromatin modification and transcriptional corepression where it contributes to transcriptional repression. Interacts with L3MBTL3 and DCAF5; the interaction requires DNMT1 methylation at Lys-142 and is necessary to target DNMT1 for ubiquitination by the CRL4-DCAF5 E3 ubiquitin ligase complex and proteasomal degradation. Interacts with PHF20L1; the interaction requires DNMT1 methylation at Lys-142 and protects DNMT1 from ubiquitination and proteasomal degradation. Post-translationally, sumoylated; sumoylation increases activity. In terms of processing, acetylation on multiple lysines, mainly by KAT2B/PCAF, regulates cell cycle G(2)/M transition. Deacetylation of Lys-1349 and Lys-1415 by SIRT1 increases methyltransferase activity. Phosphorylation of Ser-154 by CDKs is important for enzymatic activity and protein stability. Phosphorylation of Ser-143 by AKT1 prevents methylation by SETD7 thereby increasing DNMT1 stability. Post-translationally, methylation at Lys-142 by SETD7 is necessary for the regulation of DNMT1 proteasomal degradation. In terms of processing, ubiquitinated by UHRF1; interaction with USP7 counteracts ubiquitination by UHRF1 by promoting deubiquitination and preventing degradation by the proteasome. Ubiquitous; highly expressed in fetal tissues, heart, kidney, placenta, peripheral blood mononuclear cells, and expressed at lower levels in spleen, lung, brain, small intestine, colon, liver, and skeletal muscle. Isoform 2 is less expressed than isoform 1.

It localises to the nucleus. It catalyses the reaction a 2'-deoxycytidine in DNA + S-adenosyl-L-methionine = a 5-methyl-2'-deoxycytidine in DNA + S-adenosyl-L-homocysteine + H(+). Functionally, methylates CpG residues. Preferentially methylates hemimethylated DNA. Associates with DNA replication sites in S phase maintaining the methylation pattern in the newly synthesized strand, that is essential for epigenetic inheritance. Associates with chromatin during G2 and M phases to maintain DNA methylation independently of replication. It is responsible for maintaining methylation patterns established in development. DNA methylation is coordinated with methylation of histones. Mediates transcriptional repression by direct binding to HDAC2. In association with DNMT3B and via the recruitment of CTCFL/BORIS, involved in activation of BAG1 gene expression by modulating dimethylation of promoter histone H3 at H3K4 and H3K9. Probably forms a corepressor complex required for activated KRAS-mediated promoter hypermethylation and transcriptional silencing of tumor suppressor genes (TSGs) or other tumor-related genes in colorectal cancer (CRC) cells. Also required to maintain a transcriptionally repressive state of genes in undifferentiated embryonic stem cells (ESCs). Associates at promoter regions of tumor suppressor genes (TSGs) leading to their gene silencing. Promotes tumor growth. The chain is DNA (cytosine-5)-methyltransferase 1 (DNMT1) from Homo sapiens (Human).